Consider the following 332-residue polypeptide: Methionine synthase (332 aa).

The Zn(2+) site is built by His-211, Cys-213, and Cys-296.

It belongs to the archaeal MetE family. Requires Zn(2+) as cofactor.

Its pathway is amino-acid biosynthesis; L-methionine biosynthesis via de novo pathway. Functionally, catalyzes the transfer of a methyl group to L-homocysteine resulting in methionine formation. The physiological methyl donor is unknown. This chain is Methionine synthase, found in Saccharolobus islandicus (strain L.S.2.15 / Lassen #1) (Sulfolobus islandicus).